Reading from the N-terminus, the 520-residue chain is MGKKGKKEKKGRGAEKTAAKMEKKVSKRSRKEEEDLEALIAHFQTLDAKRTQTVELPCPPPSPRLNASLSVHPEKDELILFGGEYFNGQKTFLYNELYVYNTRKDTWTKVDIPSPPPRRCAHQAVVVPQGGGQLWVFGGEFASPNGEQFYHYKDLWVLHLATKTWEQVKSTGGPSGRSGHRMVAWKRQLILFGGFHESTRDYIYYNDVYAFNLDTFTWSKLSPSGTGPTPRSGCQMSVTPQGGIVVYGGYSKQRVKKDVDKGTRHSDMFLLKPEDGREDKWVWTRMNPSGVKPTPRSGFSVAMAPNHQTLFFGGVCDEEEEESLSGEFFNDLYFYDATRNRWFEGQLKGPKSEKKKRRRGRKEEPEGGSRPACGGAGTQGPVQLVKEVVAEDGTVVTIKQVLTAPGSAGQPRSEDEDSLEEAGSPAPGPCPRSNAMLAVKHGVLYVYGGMFEAGDRQVTLSDLHCLDLHRMEAWKALVEMDPETQEWLEETDSEEDSEEVEGAEGGVDDEDSGEESGAED.

Positions 1-10 (MGKKGKKEKK) are enriched in basic residues. The segment at 1–33 (MGKKGKKEKKGRGAEKTAAKMEKKVSKRSRKEE) is disordered. Basic and acidic residues predominate over residues 11–24 (GRGAEKTAAKMEKK). Kelch repeat units follow at residues 77–129 (ELIL…VVPQ), 133–187 (QLWV…AWKR), 188–241 (QLIL…VTPQ), 243–289 (GIVV…MNPS), and 308–361 (QTLF…RRGR). Disordered stretches follow at residues 346 to 379 (QLKGPKSEKKKRRRGRKEEPEGGSRPACGGAGTQ), 402 to 431 (LTAPGSAGQPRSEDEDSLEEAGSPAPGPCP), and 481 to 520 (DPETQEWLEETDSEEDSEEVEGAEGGVDDEDSGEESGAED). Residues Ser413 and Ser418 each carry the phosphoserine modification. Residues 443-494 (VLYVYGGMFEAGDRQVTLSDLHCLDLHRMEAWKALVEMDPETQEWLEETDSE) form a Kelch 6 repeat.

The chain is Kelch domain-containing protein 4 (KLHDC4) from Homo sapiens (Human).